Consider the following 73-residue polypeptide: Putative membrane protein insertion efficiency factor (73 aa).

The protein belongs to the UPF0161 family.

The protein localises to the cell inner membrane. Could be involved in insertion of integral membrane proteins into the membrane. The protein is Putative membrane protein insertion efficiency factor of Rickettsia bellii (strain OSU 85-389).